A 626-amino-acid chain; its full sequence is MNDDSQDKIIHDIRIQLRKAATELSRWKLYGSSKWAAEALAGLAEAIDVDQTHSLADESPLRNKQGVPKQMFEIPQNGFGLSETEYDLYLLGSTLFDAKEFDRCVFFLKDVTNPYLKFLKLYSKFLSWDKKSQESMENILTTGKFTDEMYRANKDGDGSGNEDINQSGHQRANLKMVSNEHESQSNISSILKEINTFLESYEIKIDDDEADLGLALLYYLRGVILKQEKNISKAMSSFLKSLSCYSFNWSCWLELMDCLQKVDDALLLNNYLYQNFQFKFSENLGSQRTIEFNIMIKFFKLKVFEELNGQLEDYFEDLEFLLQVFPNFTFLKAYNATISYNNLDYVTAESRFDDIVKQDPYRLNDLETYSNILYVMQKNSKLAYLAQFVSQIDRFRPETCCIIANYYSARQEHEKSIMYFRRALTLDKKTTNAWTLMGHEFVELSNSHAAIECYRRAVDICPRDFKAWFGLGQAYALLDMHLYSLYYFQKACTLKPWDRRIWQVLGECYSKTGNKVEAIKCYKRSIKASQTVDQNTSIYYRLAQLYEELEDLQECKKFMMKCVDVEELLEGIVTDETVKARLWLAIFEIKAGNYQLAYDYAMGVSSGTSQEIEEARMLARECRRHM.

Ser59 is modified (phosphoserine; by CDC28). TPR repeat units follow at residues 215–248, 295–328, 329–362, 363–396, 397–430, 431–464, 465–498, 499–532, and 536–569; these read ALLY…YSFN, MIKF…FPNF, TFLK…DPYR, LNDL…DRFR, PETC…DKKT, TNAW…CPRD, FKAW…KPWD, RRIW…SQTV, and TSIY…EELL.

This sequence belongs to the APC8/CDC23 family. The APC/C is composed of at least 13 subunits that stay tightly associated throughout the cell cycle: APC1, APC2, APC4, APC5, APC9, APC11, CDC16, CDC23, CDC26, CDC27, DOC1, MND2 and SWM1. CDC23 interacts directly with SWM1 and binds the destruction box (D-box) of the substrate cyclin CLB2. In terms of processing, phosphorylated by CDC28, which is required for the early mitotic activity of the APC/C in its CDC20-bound form.

The protein resides in the nucleus. It is found in the chromosome. Its subcellular location is the centromere. It localises to the kinetochore. It participates in protein modification; protein ubiquitination. Its function is as follows. Component of the anaphase promoting complex/cyclosome (APC/C), a cell cycle-regulated E3 ubiquitin-protein ligase complex that controls progression through mitosis and the G1 phase of the cell cycle. The APC/C is thought to confer substrate specificity and, in the presence of ubiquitin-conjugating E2 enzymes, it catalyzes the formation of protein-ubiquitin conjugates that are subsequently degraded by the 26S proteasome. In early mitosis, the APC/C is activated by CDC20 and targets securin PDS1, the B-type cyclin CLB5, and other anaphase inhibitory proteins for proteolysis, thereby triggering the separation of sister chromatids at the metaphase-to-anaphase transition. In late mitosis and in G1, degradation of CLB5 allows activation of the APC/C by CDH1, which is needed to destroy CDC20 and the B-type cyclin CLB2 to allow exit from mitosis and creating the low CDK state necessary for cytokinesis and for reforming prereplicative complexes in G1 prior to another round of replication. This chain is Anaphase-promoting complex subunit CDC23 (CDC23), found in Saccharomyces cerevisiae (strain ATCC 204508 / S288c) (Baker's yeast).